The primary structure comprises 325 residues: GMP reductase (325 aa).

The active-site Thioimidate intermediate is C174. Position 203–226 (203–226 (IVADGGIRNNGDIAKSIRFGASMC)) interacts with NADP(+).

It belongs to the IMPDH/GMPR family. GuaC type 2 subfamily.

The enzyme catalyses IMP + NH4(+) + NADP(+) = GMP + NADPH + 2 H(+). Its function is as follows. Catalyzes the irreversible NADPH-dependent deamination of GMP to IMP. It functions in the conversion of nucleobase, nucleoside and nucleotide derivatives of G to A nucleotides, and in maintaining the intracellular balance of A and G nucleotides. The polypeptide is GMP reductase (Ligilactobacillus salivarius (strain UCC118) (Lactobacillus salivarius)).